Here is a 378-residue protein sequence, read N- to C-terminus: Beta sliding clamp (378 aa).

It belongs to the beta sliding clamp family. In terms of assembly, forms a ring-shaped head-to-tail homodimer around DNA which binds and tethers DNA polymerases and other proteins to the DNA. The DNA replisome complex has a single clamp-loading complex (3 tau and 1 each of delta, delta', psi and chi subunits) which binds 3 Pol III cores (1 core on the leading strand and 2 on the lagging strand) each with a beta sliding clamp dimer. Additional proteins in the replisome are other copies of gamma, psi and chi, Ssb, DNA helicase and RNA primase.

It localises to the cytoplasm. Its function is as follows. Confers DNA tethering and processivity to DNA polymerases and other proteins. Acts as a clamp, forming a ring around DNA (a reaction catalyzed by the clamp-loading complex) which diffuses in an ATP-independent manner freely and bidirectionally along dsDNA. Initially characterized for its ability to contact the catalytic subunit of DNA polymerase III (Pol III), a complex, multichain enzyme responsible for most of the replicative synthesis in bacteria; Pol III exhibits 3'-5' exonuclease proofreading activity. The beta chain is required for initiation of replication as well as for processivity of DNA replication. The polypeptide is Beta sliding clamp (dnaN) (Streptococcus pneumoniae serotype 4 (strain ATCC BAA-334 / TIGR4)).